We begin with the raw amino-acid sequence, 624 residues long: Phosphoenolpyruvate carboxykinase (ATP) 1 (624 aa).

The disordered stretch occupies residues Met-1 to Val-22. Gly-322–Thr-329 is an ATP binding site.

This sequence belongs to the phosphoenolpyruvate carboxykinase (ATP) family. As to quaternary structure, homohexamer. In terms of tissue distribution, green leaves but not in roots or etiolated shoots.

The protein localises to the cytoplasm. It carries out the reaction oxaloacetate + ATP = phosphoenolpyruvate + ADP + CO2. It participates in carbohydrate biosynthesis; gluconeogenesis. The chain is Phosphoenolpyruvate carboxykinase (ATP) 1 (PCK1) from Urochloa panicoides (Panic liverseed grass).